Here is a 503-residue protein sequence, read N- to C-terminus: Apolipoprotein N-acyltransferase (503 aa).

7 consecutive transmembrane segments (helical) span residues 13 to 32 (RWRG…LTAL), 34 to 54 (MPGF…LYAV), 63 to 83 (AFLS…WVLP), 102 to 122 (IVVF…FGFL), 124 to 144 (YFAP…YTIF), 173 to 193 (IVSI…NVLF), and 203 to 223 (LLIF…VHLL). The CN hydrolase domain maps to 231–460 (FKVVALQPNV…RLAGEFHIKA (230 aa)). Residue glutamate 273 is the Proton acceptor of the active site. The active site involves lysine 321. Residue cysteine 371 is the Nucleophile of the active site. A helical membrane pass occupies residues 468 to 488 (VRYGDWFFYLSVILAVVSVFI).

It belongs to the CN hydrolase family. Apolipoprotein N-acyltransferase subfamily.

It is found in the cell inner membrane. The enzyme catalyses N-terminal S-1,2-diacyl-sn-glyceryl-L-cysteinyl-[lipoprotein] + a glycerophospholipid = N-acyl-S-1,2-diacyl-sn-glyceryl-L-cysteinyl-[lipoprotein] + a 2-acyl-sn-glycero-3-phospholipid + H(+). The protein operates within protein modification; lipoprotein biosynthesis (N-acyl transfer). Its function is as follows. Catalyzes the phospholipid dependent N-acylation of the N-terminal cysteine of apolipoprotein, the last step in lipoprotein maturation. This Thermotoga maritima (strain ATCC 43589 / DSM 3109 / JCM 10099 / NBRC 100826 / MSB8) protein is Apolipoprotein N-acyltransferase.